The sequence spans 333 residues: Adenosine deaminase (333 aa).

H12 and H14 together coordinate Zn(2+). Residues H14, D16, and G170 each coordinate substrate. H197 lines the Zn(2+) pocket. Catalysis depends on E200, which acts as the Proton donor. D278 lines the Zn(2+) pocket. Residue D279 participates in substrate binding.

Belongs to the metallo-dependent hydrolases superfamily. Adenosine and AMP deaminases family. Adenosine deaminase subfamily. The cofactor is Zn(2+).

It catalyses the reaction adenosine + H2O + H(+) = inosine + NH4(+). The catalysed reaction is 2'-deoxyadenosine + H2O + H(+) = 2'-deoxyinosine + NH4(+). Its function is as follows. Catalyzes the hydrolytic deamination of adenosine and 2-deoxyadenosine. In Salmonella dublin (strain CT_02021853), this protein is Adenosine deaminase.